The chain runs to 143 residues: Large ribosomal subunit protein uL11 (143 aa).

This sequence belongs to the universal ribosomal protein uL11 family. As to quaternary structure, part of the ribosomal stalk of the 50S ribosomal subunit. Interacts with L10 and the large rRNA to form the base of the stalk. L10 forms an elongated spine to which L12 dimers bind in a sequential fashion forming a multimeric L10(L12)X complex. Post-translationally, one or more lysine residues are methylated.

Functionally, forms part of the ribosomal stalk which helps the ribosome interact with GTP-bound translation factors. The sequence is that of Large ribosomal subunit protein uL11 from Herminiimonas arsenicoxydans.